Consider the following 281-residue polypeptide: Pantothenate synthetase (281 aa).

30–37 contributes to the ATP binding site; it reads MGYLHEGH. The Proton donor role is filled by His37. Gln61 serves as a coordination point for (R)-pantoate. Gln61 is a beta-alanine binding site. 147 to 150 contributes to the ATP binding site; the sequence is GEKD. Gln153 lines the (R)-pantoate pocket. ATP-binding positions include Ile176 and 184-187; that span reads KSSR.

The protein belongs to the pantothenate synthetase family. As to quaternary structure, homodimer.

It is found in the cytoplasm. The enzyme catalyses (R)-pantoate + beta-alanine + ATP = (R)-pantothenate + AMP + diphosphate + H(+). Its pathway is cofactor biosynthesis; (R)-pantothenate biosynthesis; (R)-pantothenate from (R)-pantoate and beta-alanine: step 1/1. Catalyzes the condensation of pantoate with beta-alanine in an ATP-dependent reaction via a pantoyl-adenylate intermediate. In Clostridium botulinum (strain ATCC 19397 / Type A), this protein is Pantothenate synthetase.